We begin with the raw amino-acid sequence, 331 residues long: Cathepsin 7 (331 aa).

An N-terminal signal peptide occupies residues M1–A17. Positions A18 to K111 are cleaved as a propeptide — activation peptide. Positions K33–A50 match the Nuclear localization signal motif. N-linked (GlcNAc...) asparagine glycosylation is present at N72. Intrachain disulfides connect C133-C176, C167-C209, and C267-C320. Residue C136 is part of the active site. Catalysis depends on residues H274 and N298.

The protein belongs to the peptidase C1 family.

Its subcellular location is the endosome. The protein resides in the lysosome. It localises to the cytoplasm. It is found in the perinuclear region. The protein localises to the golgi apparatus. Its subcellular location is the nucleus. The protein resides in the secreted. It localises to the extracellular space. Involved in trophoblast cell proliferation and differentiation probably by affecting mitotic cell cycle progression. Proteolytic activity and nuclear localization are essential for its role in cell cycle progression. The sequence is that of Cathepsin 7 (Cts7) from Rattus norvegicus (Rat).